A 792-amino-acid chain; its full sequence is Endonuclease MutS2 (792 aa).

334–341 (GPNTGGKT) provides a ligand contact to ATP. Residues 717-792 (IDLRGMMLSE…ENGVTVVELK (76 aa)) enclose the Smr domain.

This sequence belongs to the DNA mismatch repair MutS family. MutS2 subfamily. In terms of assembly, homodimer. Binds to stalled ribosomes, contacting rRNA.

Its function is as follows. Endonuclease that is involved in the suppression of homologous recombination and thus may have a key role in the control of bacterial genetic diversity. Acts as a ribosome collision sensor, splitting the ribosome into its 2 subunits. Detects stalled/collided 70S ribosomes which it binds and splits by an ATP-hydrolysis driven conformational change. Acts upstream of the ribosome quality control system (RQC), a ribosome-associated complex that mediates the extraction of incompletely synthesized nascent chains from stalled ribosomes and their subsequent degradation. Probably generates substrates for RQC. This is Endonuclease MutS2 from Ruminiclostridium cellulolyticum (strain ATCC 35319 / DSM 5812 / JCM 6584 / H10) (Clostridium cellulolyticum).